Here is a 298-residue protein sequence, read N- to C-terminus: Small ribosomal subunit protein uS2 (298 aa).

The tract at residues E232–E298 is disordered. A compositionally biased stretch (acidic residues) spans F234 to P250. Residues E251–A276 are compositionally biased toward low complexity.

Belongs to the universal ribosomal protein uS2 family.

This chain is Small ribosomal subunit protein uS2, found in Acaryochloris marina (strain MBIC 11017).